The primary structure comprises 986 residues: Resact receptor (986 aa).

The first 21 residues, 1-21 (MATTRLLFLLVVAVMITMVRS), serve as a signal peptide directing secretion. At 22 to 507 (ATLHYNPTVI…GELCTNWGLY (486 aa)) the chain is on the extracellular side. Asparagine 185, asparagine 361, and asparagine 410 each carry an N-linked (GlcNAc...) asparagine glycan. The chain crosses the membrane as a helical span at residues 508-528 (LGTLIPAFIIIFGGGLGYYIY). Over 529-986 (RKRAYEAALD…SHSCSALHSS (458 aa)) the chain is Cytoplasmic. A Protein kinase domain is found at 568 to 836 (LSAISVISNA…PNIIEVRTML (269 aa)).

It is found in the membrane. The catalysed reaction is GTP = 3',5'-cyclic GMP + diphosphate. Its function is as follows. Implicated as a cell-surface receptor on spermatozoa for 'resact' a chemotactic peptide, and on various other cells as a receptor for atrial natriuretic peptide. The sequence is that of Resact receptor from Arbacia punctulata (Punctuate sea urchin).